The primary structure comprises 150 residues: MNIIKTGIKQSLVSGIYSKVGIRAFCTHYSAELEWVKLSDDNKVATVGLSSFGAQRLGKINYVELPKEHRKCRREEKFGVLESSNATAFGLYAPVSGEVLEVNEKLKKSPSLLNEDPANNWMVKFKVSKPDEFKKLMDSNKYKKFVQWYR.

One can recognise a Lipoyl-binding domain in the interval 44 to 126 (VATVGLSSFG…PANNWMVKFK (83 aa)).

Belongs to the GcvH family.

This Dictyostelium discoideum (Social amoeba) protein is Glycine cleavage system H-like protein gcvH2 (gcvH2).